Reading from the N-terminus, the 284-residue chain is Isopentenyl-diphosphate Delta-isomerase II, chloroplastic (284 aa).

A chloroplast-targeting transit peptide spans 1–45 (MSASSLFNLPLIRLRSLALSSSFSSFRFAHRPLSSISPRKLPNFR). N-acetylalanine is present on alanine 46. Lysine 88 lines the substrate pocket. 2 residues coordinate Mg(2+): histidine 92 and histidine 104. The 153-residue stretch at 102–254 (LLHRAFSVFL…GLKLSPWFRL (153 aa)) folds into the Nudix hydrolase domain. Positions 123 and 127 each coordinate substrate. The active site involves cysteine 139. Serine 140 is a substrate binding site. A Nudix box motif is present at residues 140-170 (SHPLYRESELIQDNALGVRNAAQRKLLDELG). Glutamate 199 and glutamate 201 together coordinate Mg(2+). Residue glutamate 201 is part of the active site.

The protein belongs to the IPP isomerase type 1 family. The cofactor is Mg(2+).

The protein resides in the plastid. It localises to the chloroplast. The catalysed reaction is isopentenyl diphosphate = dimethylallyl diphosphate. Its pathway is isoprenoid biosynthesis; dimethylallyl diphosphate biosynthesis; dimethylallyl diphosphate from isopentenyl diphosphate: step 1/1. The protein operates within porphyrin-containing compound metabolism; chlorophyll biosynthesis. Catalyzes the 1,3-allylic rearrangement of the homoallylic substrate isopentenyl (IPP) to its highly electrophilic allylic isomer, dimethylallyl diphosphate (DMAPP). The sequence is that of Isopentenyl-diphosphate Delta-isomerase II, chloroplastic (IPP2) from Arabidopsis thaliana (Mouse-ear cress).